Here is a 276-residue protein sequence, read N- to C-terminus: Proteasome chaperone 1 (276 aa).

It belongs to the PSMG1 family. Component of the 20S proteasome chaperone. Forms a heterodimer with ADD66 that binds to proteasome precursors.

It localises to the cytoplasm. Its function is as follows. Involved in 20S proteasome assembly. This chain is Proteasome chaperone 1 (PBA1), found in Saccharomyces cerevisiae (strain ATCC 204508 / S288c) (Baker's yeast).